Reading from the N-terminus, the 474-residue chain is Glycogen synthase (474 aa).

An ADP-alpha-D-glucose-binding site is contributed by lysine 15.

This sequence belongs to the glycosyltransferase 1 family. Bacterial/plant glycogen synthase subfamily.

It carries out the reaction [(1-&gt;4)-alpha-D-glucosyl](n) + ADP-alpha-D-glucose = [(1-&gt;4)-alpha-D-glucosyl](n+1) + ADP + H(+). It functions in the pathway glycan biosynthesis; glycogen biosynthesis. Its function is as follows. Synthesizes alpha-1,4-glucan chains using ADP-glucose. The protein is Glycogen synthase of Finegoldia magna (strain ATCC 29328 / DSM 20472 / WAL 2508) (Peptostreptococcus magnus).